We begin with the raw amino-acid sequence, 438 residues long: Probable chaperone protein ClpB 1 (438 aa).

Residues 1–94 adopt a coiled-coil conformation; it reads MNTADTRQRL…NNRKIEARQA (94 aa). The interval 1 to 118 is linker; sequence MNTADTRQRL…IADIVSRWTG (118 aa). Residues 128 to 345 form an NBD2 region; the sequence is ERQKLLGIES…RIDEVILFTP (218 aa). 178–185 lines the ATP pocket; sequence GPTGVGKT. Residues 346-438 are C-terminal; that stretch reads LTRENLREIV…ENDAIVMKKK (93 aa).

Belongs to the ClpA/ClpB family. Homohexamer. The oligomerization is ATP-dependent.

It is found in the cytoplasm. In terms of biological role, part of a stress-induced multi-chaperone system, it is involved in the recovery of the cell from heat-induced damage, in cooperation with DnaK, DnaJ and GrpE. Acts before DnaK, in the processing of protein aggregates. Protein binding stimulates the ATPase activity; ATP hydrolysis unfolds the denatured protein aggregates, which probably helps expose new hydrophobic binding sites on the surface of ClpB-bound aggregates, contributing to the solubilization and refolding of denatured protein aggregates by DnaK. The polypeptide is Probable chaperone protein ClpB 1 (clpB1) (Chlorobaculum tepidum (strain ATCC 49652 / DSM 12025 / NBRC 103806 / TLS) (Chlorobium tepidum)).